The chain runs to 264 residues: Carbonic anhydrase 7 (264 aa).

Residues histidine 5–phenylalanine 262 enclose the Alpha-carbonic anhydrase domain. The Proton donor/acceptor role is filled by histidine 66. 3 residues coordinate Zn(2+): histidine 96, histidine 98, and histidine 121. Threonine 201–threonine 202 serves as a coordination point for substrate.

Belongs to the alpha-carbonic anhydrase family. Requires Zn(2+) as cofactor.

The protein resides in the cytoplasm. The catalysed reaction is hydrogencarbonate + H(+) = CO2 + H2O. Reversible hydration of carbon dioxide. In Mus musculus (Mouse), this protein is Carbonic anhydrase 7 (Ca7).